Consider the following 65-residue polypeptide: Hirudin-2B (65 aa).

The interval 1–3 (ITY) is interaction with thrombin active site. Intrachain disulfides connect cysteine 6-cysteine 14, cysteine 16-cysteine 28, and cysteine 22-cysteine 39. Positions 39–65 (CVTGEGTPKPQSHNDGDFEEIPEEYLQ) are disordered. O-linked (GalNAc...) threonine glycosylation occurs at threonine 45. An interaction with fibrinogen-binding exosite of thrombin region spans residues 55-65 (DFEEIPEEYLQ). Positions 55-65 (DFEEIPEEYLQ) are enriched in acidic residues. Residue tyrosine 63 is modified to Sulfotyrosine.

The protein belongs to the protease inhibitor I14 (hirudin) family.

The protein localises to the secreted. Functionally, hirudin is a potent thrombin-specific protease inhibitor. It forms a stable non-covalent complex with alpha-thrombin, thereby abolishing its ability to cleave fibrinogen. This chain is Hirudin-2B, found in Hirudo medicinalis (Medicinal leech).